A 944-amino-acid chain; its full sequence is Protein translocase subunit SecA (944 aa).

Residues Gln-96, 114-118 (GEGKT), and Asp-554 contribute to the ATP site.

Belongs to the SecA family. Monomer and homodimer. Part of the essential Sec protein translocation apparatus which comprises SecA, SecYEG and auxiliary proteins SecDF. Other proteins may also be involved.

It localises to the cell inner membrane. The protein localises to the cytoplasm. It carries out the reaction ATP + H2O + cellular proteinSide 1 = ADP + phosphate + cellular proteinSide 2.. Its function is as follows. Part of the Sec protein translocase complex. Interacts with the SecYEG preprotein conducting channel. Has a central role in coupling the hydrolysis of ATP to the transfer of proteins into and across the cell membrane, serving as an ATP-driven molecular motor driving the stepwise translocation of polypeptide chains across the membrane. This Hydrogenobaculum sp. (strain Y04AAS1) protein is Protein translocase subunit SecA.